The following is a 32-amino-acid chain: Snaclec (32 aa).

Dimer; disulfide-linked. In terms of tissue distribution, expressed by the venom gland.

It is found in the secreted. In terms of biological role, interferes with one step of hemostasis (modulation of platelet aggregation, or coagulation cascade, for example). In Bothrops diporus (Chaco lancehead), this protein is Snaclec.